Consider the following 322-residue polypeptide: Cysteine protease yopT1 (322 aa).

Residues Cys139, His258, and Asp274 contribute to the active site.

Belongs to the peptidase C58 family. As to quaternary structure, interacts with human ARHA.

It is found in the secreted. Functionally, cysteine protease, which is translocated into infected cells and plays a central role in pathogenesis by cleaving the C-terminus end of the human small GTPase RhoA/ARHA, a regulator of cytoskeleton. Once cleaved, ARHA loses its lipid modification, and is released from the cell membrane, leading to the subsequent disruption of actin cytoskeleton of the host cell. The protein is Cysteine protease yopT1 (yopT1) of Yersinia enterocolitica.